The sequence spans 918 residues: Serine/threonine-protein kinase D1 (918 aa).

Tyr-93 is subject to Phosphotyrosine. The segment at 144–194 adopts a Phorbol-ester/DAG-type 1 zinc-finger fold; it reads PHALFVHSYRAPAFCDHCGEMLWGLVRQGLKCEGCGLNYHKRCAFKIPNNC. Phosphoserine is present on residues Ser-203, Ser-206, Ser-217, and Ser-221. Residues 276-326 form a Phorbol-ester/DAG-type 2 zinc finger; it reads PHTFVIHSYTRPTVCQFCKKLLKGLFRQGLQCKDCRFNCHKRCAPKVPNNC. Disordered stretches follow at residues 338 to 362 and 379 to 410; these read SPGAESDVVMEEGSDDNDSERNSGL and AEGQSGGAEMQDPDADQEDSNRTISPSTSNNI. Positions 345–355 are enriched in acidic residues; that stretch reads VVMEEGSDDND. Ser-351 carries the phosphoserine modification. A compositionally biased stretch (polar residues) spans 400–410; that stretch reads RTISPSTSNNI. Residues Ser-403 and Ser-407 each carry the phosphoserine; by MAPK13 modification. The PH domain maps to 428 to 547; that stretch reads TVMKEGWMVH…WEVAIQHALM (120 aa). The residue at position 438 (Tyr-438) is a Phosphotyrosine. A Phosphoserine modification is found at Ser-454. Tyr-469 carries the post-translational modification Phosphotyrosine; by ABL. Residue Tyr-508 is modified to Phosphotyrosine. Residue Ser-554 is modified to Phosphoserine. The Protein kinase domain occupies 589–845; that stretch reads IFPDEVLGSG…VDKTLSHPWL (257 aa). ATP-binding positions include 595-603 and Lys-618; that span reads LGSGQFGIV. The Proton acceptor role is filled by Asp-712. Phosphoserine; by PKC/PRKCD is present on Ser-744. Residue Ser-748 is modified to Phosphoserine; by autocatalysis and PKC/PRKCD. Position 755 is a phosphotyrosine (Tyr-755). Ser-916 carries the phosphoserine; by autocatalysis modification.

The protein belongs to the protein kinase superfamily. CAMK Ser/Thr protein kinase family. PKD subfamily. Interacts (via N-terminus) with ADAP1/CENTA1. Interacts with MAPK13. Interacts with DAPK1 in an oxidative stress-regulated manner. Interacts with USP28; the interaction induces phosphorylation of USP28 and activated KRAS-mediated stabilization of ZNF304. Interacts with AKAP13 (via C-terminal domain). It depends on Mg(2+) as a cofactor. Post-translationally, phosphorylated at Ser-403 and Ser-407 by MAPK13 during regulation of insulin secretion in pancreatic beta cells. Phosphorylated by DAPK1. Phosphorylated at Tyr-93 and by ABL at Tyr-469, which primes the kinase in response to oxidative stress, and promotes a second step activating phosphorylation at Ser-744/Ser-748 by PKRD. Phosphorylated at Ser-916 upon S.enterica infection in macrophages.

Its subcellular location is the cytoplasm. It is found in the cell membrane. The protein resides in the golgi apparatus. The protein localises to the trans-Golgi network. It carries out the reaction L-seryl-[protein] + ATP = O-phospho-L-seryl-[protein] + ADP + H(+). The enzyme catalyses L-threonyl-[protein] + ATP = O-phospho-L-threonyl-[protein] + ADP + H(+). Its activity is regulated as follows. Activated by DAG and phorbol esters. Phorbol-ester/DAG-type domain 1 binds DAG with high affinity and appears to play the dominant role in mediating translocation to the cell membrane and trans-Golgi network. Phorbol-ester/DAG-type domain 2 binds phorbol ester with higher affinity. Autophosphorylation of Ser-748 and phosphorylation of Ser-744 by PKC relieves auto-inhibition by the PH domain. Phosphorylation on Tyr-469 by the SRC-ABL1 pathway in response to oxidative stress, is also required for activation. Activated by DAPK1 under oxidative stress. In terms of biological role, serine/threonine-protein kinase that converts transient diacylglycerol (DAG) signals into prolonged physiological effects downstream of PKC, and is involved in the regulation of MAPK8/JNK1 and Ras signaling, Golgi membrane integrity and trafficking, cell survival through NF-kappa-B activation, cell migration, cell differentiation by mediating HDAC7 nuclear export, cell proliferation via MAPK1/3 (ERK1/2) signaling, and plays a role in cardiac hypertrophy, VEGFA-induced angiogenesis, genotoxic-induced apoptosis and flagellin-stimulated inflammatory response. Phosphorylates the epidermal growth factor receptor (EGFR) on dual threonine residues, which leads to the suppression of epidermal growth factor (EGF)-induced MAPK8/JNK1 activation and subsequent JUN phosphorylation. Phosphorylates RIN1, inducing RIN1 binding to 14-3-3 proteins YWHAB, YWHAE and YWHAZ and increased competition with RAF1 for binding to GTP-bound form of Ras proteins (NRAS, HRAS and KRAS). Acts downstream of the heterotrimeric G-protein beta/gamma-subunit complex to maintain the structural integrity of the Golgi membranes, and is required for protein transport along the secretory pathway. In the trans-Golgi network (TGN), regulates the fission of transport vesicles that are on their way to the plasma membrane. May act by activating the lipid kinase phosphatidylinositol 4-kinase beta (PI4KB) at the TGN for the local synthesis of phosphorylated inositol lipids, which induces a sequential production of DAG, phosphatidic acid (PA) and lyso-PA (LPA) that are necessary for membrane fission and generation of specific transport carriers to the cell surface. Under oxidative stress, is phosphorylated at Tyr-469 via SRC-ABL1 and contributes to cell survival by activating IKK complex and subsequent nuclear translocation and activation of NFKB1. Involved in cell migration by regulating integrin alpha-5/beta-3 recycling and promoting its recruitment in newly forming focal adhesion. In osteoblast differentiation, mediates the bone morphogenetic protein 2 (BMP2)-induced nuclear export of HDAC7, which results in the inhibition of HDAC7 transcriptional repression of RUNX2. In neurons, plays an important role in neuronal polarity by regulating the biogenesis of TGN-derived dendritic vesicles, and is involved in the maintenance of dendritic arborization and Golgi structure in hippocampal cells. May potentiate mitogenesis induced by the neuropeptide bombesin or vasopressin by mediating an increase in the duration of MAPK1/3 (ERK1/2) signaling, which leads to accumulation of immediate-early gene products including FOS that stimulate cell cycle progression. Plays an important role in the proliferative response induced by low calcium in keratinocytes, through sustained activation of MAPK1/3 (ERK1/2) pathway. Downstream of novel PKC signaling, plays a role in cardiac hypertrophy by phosphorylating HDAC5, which in turn triggers XPO1/CRM1-dependent nuclear export of HDAC5, MEF2A transcriptional activation and induction of downstream target genes that promote myocyte hypertrophy and pathological cardiac remodeling. Mediates cardiac troponin I (TNNI3) phosphorylation at the PKA sites, which results in reduced myofilament calcium sensitivity, and accelerated crossbridge cycling kinetics. The PRKD1-HDAC5 pathway is also involved in angiogenesis by mediating VEGFA-induced specific subset of gene expression, cell migration, and tube formation. In response to VEGFA, is necessary and required for HDAC7 phosphorylation which induces HDAC7 nuclear export and endothelial cell proliferation and migration. During apoptosis induced by cytarabine and other genotoxic agents, PRKD1 is cleaved by caspase-3 at Asp-378, resulting in activation of its kinase function and increased sensitivity of cells to the cytotoxic effects of genotoxic agents. In epithelial cells, is required for transducing flagellin-stimulated inflammatory responses by binding and phosphorylating TLR5, which contributes to MAPK14/p38 activation and production of inflammatory cytokines. Acts as an activator of NLRP3 inflammasome assembly by mediating phosphorylation of NLRP3. May play a role in inflammatory response by mediating activation of NF-kappa-B. May be involved in pain transmission by directly modulating TRPV1 receptor. Plays a role in activated KRAS-mediated stabilization of ZNF304 in colorectal cancer (CRC) cells. Regulates nuclear translocation of transcription factor TFEB in macrophages upon live S.enterica infection. This chain is Serine/threonine-protein kinase D1 (Prkd1), found in Mus musculus (Mouse).